Reading from the N-terminus, the 457-residue chain is Serine--tRNA ligase (457 aa).

252–254 (TAE) contacts L-serine. ATP contacts are provided by residues 283 to 285 (RKE) and V299. Residue E306 participates in L-serine binding. 370–373 (EVVS) contacts ATP. T406 serves as a coordination point for L-serine.

It belongs to the class-II aminoacyl-tRNA synthetase family. Type-1 seryl-tRNA synthetase subfamily. Homodimer. The tRNA molecule binds across the dimer.

It localises to the cytoplasm. The catalysed reaction is tRNA(Ser) + L-serine + ATP = L-seryl-tRNA(Ser) + AMP + diphosphate + H(+). The enzyme catalyses tRNA(Sec) + L-serine + ATP = L-seryl-tRNA(Sec) + AMP + diphosphate + H(+). The protein operates within aminoacyl-tRNA biosynthesis; selenocysteinyl-tRNA(Sec) biosynthesis; L-seryl-tRNA(Sec) from L-serine and tRNA(Sec): step 1/1. Catalyzes the attachment of serine to tRNA(Ser). Is also able to aminoacylate tRNA(Sec) with serine, to form the misacylated tRNA L-seryl-tRNA(Sec), which will be further converted into selenocysteinyl-tRNA(Sec). The polypeptide is Serine--tRNA ligase (Thermococcus onnurineus (strain NA1)).